The sequence spans 1071 residues: ATP-dependent helicase/deoxyribonuclease subunit B (1071 aa).

It belongs to the helicase family. AddB/RexB type 2 subfamily. As to quaternary structure, heterodimer of AddA and RexB. Mg(2+) serves as cofactor.

Functionally, the heterodimer acts as both an ATP-dependent DNA helicase and an ATP-dependent, dual-direction single-stranded exonuclease. Recognizes the chi site generating a DNA molecule suitable for the initiation of homologous recombination. This subunit has 5' -&gt; 3' nuclease activity but not helicase activity. The chain is ATP-dependent helicase/deoxyribonuclease subunit B from Streptococcus pyogenes serotype M49 (strain NZ131).